An 89-amino-acid polypeptide reads, in one-letter code: MALKQQRKQEIIGEYQTHETDTGSADVQVAMLTEKITKLSAHLRNNKQDYSSQRGLLKMIGKRKRLLTYIQKQNQERYKALITRLGIRG.

It belongs to the universal ribosomal protein uS15 family. As to quaternary structure, part of the 30S ribosomal subunit. Forms a bridge to the 50S subunit in the 70S ribosome, contacting the 23S rRNA.

One of the primary rRNA binding proteins, it binds directly to 16S rRNA where it helps nucleate assembly of the platform of the 30S subunit by binding and bridging several RNA helices of the 16S rRNA. In terms of biological role, forms an intersubunit bridge (bridge B4) with the 23S rRNA of the 50S subunit in the ribosome. In Trichodesmium erythraeum (strain IMS101), this protein is Small ribosomal subunit protein uS15.